The sequence spans 676 residues: XK-related protein 5 (676 aa).

A run of 7 helical transmembrane segments spans residues 37–57 (WLAL…FLWF), 114–134 (LLEA…VFLA), 140–160 (IVPG…LVSY), 206–226 (VWVL…LVAQ), 239–259 (LFNL…WDSP), 266–286 (SFYL…TDFL), and 294–314 (LWTV…LVIY). Disordered regions lie at residues 336–362 (PIED…DSSS), 372–391 (TSLD…GLGE), 495–538 (LEDN…KEGQ), and 598–661 (PIPG…IQRD). Residues 498–509 (NATTQKPPATQE) show a composition bias toward polar residues.

It belongs to the XK family.

It localises to the cell membrane. The sequence is that of XK-related protein 5 from Mus musculus (Mouse).